Here is a 115-residue protein sequence, read N- to C-terminus: U3-lycotoxin-Ls1v (115 aa).

The N-terminal stretch at 1 to 20 (MKFVLLFGVLLVTLFSHSSA) is a signal peptide. Residues 21 to 44 (EMLDDFDQADEDELLSLIEKEEAR) constitute a propeptide that is removed on maturation. 4 disulfide bridges follow: cysteine 48-cysteine 63, cysteine 55-cysteine 72, cysteine 62-cysteine 87, and cysteine 74-cysteine 85.

The protein belongs to the neurotoxin 19 (CSTX) family. 01 subfamily. As to expression, expressed by the venom gland.

It is found in the secreted. This is U3-lycotoxin-Ls1v from Lycosa singoriensis (Wolf spider).